Consider the following 893-residue polypeptide: UPF0182 protein CLI_0022 (893 aa).

Transmembrane regions (helical) follow at residues 9 to 29 (IPLF…NFII), 49 to 69 (AIII…WMYY), 94 to 114 (LFFI…SSSY), 154 to 174 (VIIS…FILE), 202 to 222 (LAIV…IKIW), 246 to 266 (FYKI…LSIV), and 273 to 293 (VSIC…ASFL).

This sequence belongs to the UPF0182 family.

It localises to the cell membrane. This Clostridium botulinum (strain Langeland / NCTC 10281 / Type F) protein is UPF0182 protein CLI_0022.